The primary structure comprises 207 residues: Imidazole glycerol phosphate synthase subunit HisH (207 aa).

The Glutamine amidotransferase type-1 domain maps to 1 to 206 (MMIVIGYDAG…KEYVYENTAR (206 aa)). Cysteine 79 functions as the Nucleophile in the catalytic mechanism. Catalysis depends on residues histidine 181 and glutamate 183.

In terms of assembly, heterodimer of HisH and HisF.

It localises to the cytoplasm. The enzyme catalyses 5-[(5-phospho-1-deoxy-D-ribulos-1-ylimino)methylamino]-1-(5-phospho-beta-D-ribosyl)imidazole-4-carboxamide + L-glutamine = D-erythro-1-(imidazol-4-yl)glycerol 3-phosphate + 5-amino-1-(5-phospho-beta-D-ribosyl)imidazole-4-carboxamide + L-glutamate + H(+). It catalyses the reaction L-glutamine + H2O = L-glutamate + NH4(+). Its pathway is amino-acid biosynthesis; L-histidine biosynthesis; L-histidine from 5-phospho-alpha-D-ribose 1-diphosphate: step 5/9. In terms of biological role, IGPS catalyzes the conversion of PRFAR and glutamine to IGP, AICAR and glutamate. The HisH subunit catalyzes the hydrolysis of glutamine to glutamate and ammonia as part of the synthesis of IGP and AICAR. The resulting ammonia molecule is channeled to the active site of HisF. The sequence is that of Imidazole glycerol phosphate synthase subunit HisH from Streptococcus gordonii (strain Challis / ATCC 35105 / BCRC 15272 / CH1 / DL1 / V288).